Here is a 286-residue protein sequence, read N- to C-terminus: Uridylate cyclase (286 aa).

The region spanning 90-223 is the Guanylate cyclase domain; it reads TAIFVDIRKS…DAVTKAANMS (134 aa). A ribonucleoside 5'-triphosphate is bound at residue phenylalanine 93. Mn(2+) is bound by residues aspartate 95, isoleucine 96, and aspartate 140.

It belongs to the adenylyl cyclase class-4/guanylyl cyclase family. Pyrimidine cyclase subfamily. As to quaternary structure, homodimer. Requires Mn(2+) as cofactor.

It is found in the cytoplasm. The enzyme catalyses UTP = 3',5'-cyclic UMP + diphosphate. Its function is as follows. Pycsar (pyrimidine cyclase system for antiphage resistance) provides immunity against bacteriophage. The pyrimidine cyclase (PycC) synthesizes cyclic nucleotides in response to infection; these serve as specific second messenger signals. The signals activate the adjacent effector, leading to bacterial cell death and abortive phage infection. A clade C Pycsar system. Functionally, the pyrimidine cyclase gene of a two-gene Pycsar system, weakly generates cyclic UMP (cUMP) from UTP, has little to no activity on ATP, CTP or GTP. Expression of this and adjacent effector TpPycTM (AC A0A1T4LJG1) probably confers resistance to bacteriophage. The genes are probably only expressed in response to bacteriophage infection. This Treponema porcinum protein is Uridylate cyclase.